The chain runs to 215 residues: Variable small protein 2 (215 aa).

The N-terminal stretch at 1–18 (MRKRISAIIMTLFMVFMS) is a signal peptide. Cysteine 19 carries the N-palmitoyl cysteine lipid modification. A lipid anchor (S-diacylglycerol cysteine) is attached at cysteine 19.

This sequence belongs to the variable small protein (Vsp) family.

It localises to the cell outer membrane. The Vlp and Vsp proteins are antigenically distinct proteins, only one vlp or vsp gene is transcriptionally active at any one time. Switching between these genes is a mechanism of host immune response evasion. The sequence is that of Variable small protein 2 from Borrelia hermsii.